The sequence spans 539 residues: Phosphoenolpyruvate carboxykinase (ATP) (539 aa).

Residues Arg-64, Tyr-206, and Lys-212 each contribute to the substrate site. ATP-binding positions include Lys-212, His-231, and Gly-247–Thr-255. Residues Lys-212 and His-231 each coordinate Mn(2+). Asp-268 serves as a coordination point for Mn(2+). Residues Glu-296, Arg-332, Arg-448–Ile-449, and Thr-454 contribute to the ATP site. Arg-332 lines the substrate pocket.

The protein belongs to the phosphoenolpyruvate carboxykinase (ATP) family. Monomer. Mn(2+) is required as a cofactor.

The protein localises to the cytoplasm. The catalysed reaction is oxaloacetate + ATP = phosphoenolpyruvate + ADP + CO2. It participates in carbohydrate biosynthesis; gluconeogenesis. Functionally, involved in the gluconeogenesis. Catalyzes the conversion of oxaloacetate (OAA) to phosphoenolpyruvate (PEP) through direct phosphoryl transfer between the nucleoside triphosphate and OAA. The polypeptide is Phosphoenolpyruvate carboxykinase (ATP) (Sodalis glossinidius (strain morsitans)).